We begin with the raw amino-acid sequence, 103 residues long: Large ribosomal subunit protein uL24 (103 aa).

This sequence belongs to the universal ribosomal protein uL24 family. Part of the 50S ribosomal subunit.

In terms of biological role, one of two assembly initiator proteins, it binds directly to the 5'-end of the 23S rRNA, where it nucleates assembly of the 50S subunit. Its function is as follows. One of the proteins that surrounds the polypeptide exit tunnel on the outside of the subunit. The sequence is that of Large ribosomal subunit protein uL24 from Anoxybacillus flavithermus (strain DSM 21510 / WK1).